The following is a 95-amino-acid chain: MADVLDEVYAVIADRKVNPKEGSYTTSLYNHRKGIDKVLEKIGEESTELIIAAKNGGEKEIVSECADLFFHAMVLLAAKDIPFEKIKEEFERRRK.

The protein belongs to the PRA-PH family.

The protein localises to the cytoplasm. It catalyses the reaction 1-(5-phospho-beta-D-ribosyl)-ATP + H2O = 1-(5-phospho-beta-D-ribosyl)-5'-AMP + diphosphate + H(+). Its pathway is amino-acid biosynthesis; L-histidine biosynthesis; L-histidine from 5-phospho-alpha-D-ribose 1-diphosphate: step 2/9. This chain is Phosphoribosyl-ATP pyrophosphatase, found in Methanocella arvoryzae (strain DSM 22066 / NBRC 105507 / MRE50).